Reading from the N-terminus, the 90-residue chain is MAVKIRLKRMGSKRSPFYRIVVADSRSPRDGRFIETVGTYNPVLSPAEVKINEELALKWLQNGAKPSDTVRNLFSSQGILEKFHNAKNSK.

It belongs to the bacterial ribosomal protein bS16 family.

This is Small ribosomal subunit protein bS16 from Bacillus pumilus (strain SAFR-032).